Reading from the N-terminus, the 78-residue chain is Putative snRNP Sm-like protein (78 aa).

The Sm domain occupies 4–76; that stretch reads RPLDVIHRSL…VLAISPVDVG (73 aa).

It belongs to the snRNP Sm proteins family.

The sequence is that of Putative snRNP Sm-like protein from Thermococcus onnurineus (strain NA1).